We begin with the raw amino-acid sequence, 189 residues long: Insecticyanin-A (189 aa).

2 disulfides stabilise this stretch: C9–C119 and C43–C175.

This sequence belongs to the calycin superfamily. Lipocalin family. Homotetramer. As to expression, synthesized only in the caterpillars, apparently by the epidermis and secreted into the hemolymph. The protein is passed over from the larval hemolymph to that of pupae and adults and is sequestered in the eggs.

The protein resides in the secreted. This protein binds a chromophore: biliverdin IX, isomer gamma. Mixed with lipoprotein-bound carotenes, this blue protein provides hornworms with their green cryptic coloration which serves a camouflage. This chain is Insecticyanin-A (INSA), found in Manduca sexta (Tobacco hawkmoth).